The sequence spans 161 residues: Regulator of ribonuclease activity A (161 aa).

It belongs to the RraA family. Homotrimer. Binds to both RNA-binding sites in the C-terminal region of Rne and to RhlB.

It is found in the cytoplasm. Functionally, globally modulates RNA abundance by binding to RNase E (Rne) and regulating its endonucleolytic activity. Can modulate Rne action in a substrate-dependent manner by altering the composition of the degradosome. Modulates RNA-binding and helicase activities of the degradosome. This is Regulator of ribonuclease activity A from Klebsiella pneumoniae (strain 342).